We begin with the raw amino-acid sequence, 218 residues long: Small ribosomal subunit protein uS4 (218 aa).

The S4 RNA-binding domain occupies 111–175 (RRLQTQVLRL…SPLKNESHPE (65 aa)). The tract at residues 192-218 (KAAAEAKQAREKPPERGGGRRKRGGRR) is disordered. Residues 198 to 209 (KQAREKPPERGG) are compositionally biased toward basic and acidic residues.

This sequence belongs to the universal ribosomal protein uS4 family. In terms of assembly, part of the 30S ribosomal subunit. Contacts protein S5. The interaction surface between S4 and S5 is involved in control of translational fidelity.

One of the primary rRNA binding proteins, it binds directly to 16S rRNA where it nucleates assembly of the body of the 30S subunit. In terms of biological role, with S5 and S12 plays an important role in translational accuracy. In Methanosarcina acetivorans (strain ATCC 35395 / DSM 2834 / JCM 12185 / C2A), this protein is Small ribosomal subunit protein uS4.